A 464-amino-acid polypeptide reads, in one-letter code: ATP synthase subunit beta 2 (464 aa).

147-154 (GGAGVGKT) serves as a coordination point for ATP.

This sequence belongs to the ATPase alpha/beta chains family. F-type ATPases have 2 components, CF(1) - the catalytic core - and CF(0) - the membrane proton channel. CF(1) has five subunits: alpha(3), beta(3), gamma(1), delta(1), epsilon(1). CF(0) has four main subunits: a(1), b(1), b'(1) and c(9-12).

It is found in the cell inner membrane. It carries out the reaction ATP + H2O + 4 H(+)(in) = ADP + phosphate + 5 H(+)(out). In terms of biological role, produces ATP from ADP in the presence of a proton gradient across the membrane. The catalytic sites are hosted primarily by the beta subunits. This chain is ATP synthase subunit beta 2, found in Cereibacter sphaeroides (strain ATCC 17023 / DSM 158 / JCM 6121 / CCUG 31486 / LMG 2827 / NBRC 12203 / NCIMB 8253 / ATH 2.4.1.) (Rhodobacter sphaeroides).